The sequence spans 260 residues: NH(3)-dependent NAD(+) synthetase (260 aa).

Position 31–38 (31–38) interacts with ATP; it reads GLSGGLDS. D37 contacts Mg(2+). Position 112 (R112) interacts with deamido-NAD(+). T132 contributes to the ATP binding site. E137 lines the Mg(2+) pocket. Positions 161 and 183 each coordinate ATP.

This sequence belongs to the NAD synthetase family. As to quaternary structure, homodimer.

The catalysed reaction is deamido-NAD(+) + NH4(+) + ATP = AMP + diphosphate + NAD(+) + H(+). Its pathway is cofactor biosynthesis; NAD(+) biosynthesis; NAD(+) from deamido-NAD(+) (ammonia route): step 1/1. Functionally, catalyzes the ATP-dependent amidation of deamido-NAD to form NAD. Uses ammonia as a nitrogen source. This Helicobacter pylori (strain P12) protein is NH(3)-dependent NAD(+) synthetase.